Consider the following 68-residue polypeptide: Alpha-conotoxin Lp1.4 (68 aa).

Residues 1-21 (MGMRMMSIMFMLVVLATTVVS) form the signal peptide. Residues 22–48 (FTSDRALDAMNAAASKKASRLIALAVR) constitute a propeptide that is removed on maturation. Disulfide bonds link Cys50/Cys56 and Cys51/Cys64. Residues 52 to 54 (SHP) form a ser-Xaa-Pro motif, crucial for potent interaction with nAChR region. Aspartic acid 1-amide is present on Asp65.

The protein belongs to the conotoxin A superfamily. In terms of tissue distribution, expressed by the venom duct.

Its subcellular location is the secreted. Its function is as follows. Alpha-conotoxins act on postsynaptic membranes, they bind to the nicotinic acetylcholine receptors (nAChR) and thus inhibit them. This toxin inhibits mouse muscle alpha-1-beta-1-gamma-delta (CHRNA1-CHRNB1-CHRNG-CHRND), and weakly rat neuronal alpha-6/alpha-3-beta-2 (CHRNA6/CHRNA3-CHRNB2). The polypeptide is Alpha-conotoxin Lp1.4 (Conus leopardus (Leopard cone)).